The sequence spans 332 residues: Holliday junction branch migration complex subunit RuvB (332 aa).

The interval 1 to 181 is large ATPase domain (RuvB-L); the sequence is MSRILDNEIM…FGITGHMEYY (181 aa). Residues leucine 20, arginine 21, glycine 62, lysine 65, threonine 66, threonine 67, 128–130, arginine 171, tyrosine 181, and arginine 218 each bind ATP; that span reads EDF. Position 66 (threonine 66) interacts with Mg(2+). A small ATPAse domain (RuvB-S) region spans residues 182-252; sequence AHADLTEIVE…ITDKALTMLD (71 aa). The segment at 255–332 is head domain (RuvB-H); that stretch reads HEGLDYVDQK…EHLGYEYNEK (78 aa). The DNA site is built by arginine 291, arginine 310, arginine 312, and arginine 315.

This sequence belongs to the RuvB family. Homohexamer. Forms an RuvA(8)-RuvB(12)-Holliday junction (HJ) complex. HJ DNA is sandwiched between 2 RuvA tetramers; dsDNA enters through RuvA and exits via RuvB. An RuvB hexamer assembles on each DNA strand where it exits the tetramer. Each RuvB hexamer is contacted by two RuvA subunits (via domain III) on 2 adjacent RuvB subunits; this complex drives branch migration. In the full resolvosome a probable DNA-RuvA(4)-RuvB(12)-RuvC(2) complex forms which resolves the HJ.

The protein resides in the cytoplasm. The enzyme catalyses ATP + H2O = ADP + phosphate + H(+). The RuvA-RuvB-RuvC complex processes Holliday junction (HJ) DNA during genetic recombination and DNA repair, while the RuvA-RuvB complex plays an important role in the rescue of blocked DNA replication forks via replication fork reversal (RFR). RuvA specifically binds to HJ cruciform DNA, conferring on it an open structure. The RuvB hexamer acts as an ATP-dependent pump, pulling dsDNA into and through the RuvAB complex. RuvB forms 2 homohexamers on either side of HJ DNA bound by 1 or 2 RuvA tetramers; 4 subunits per hexamer contact DNA at a time. Coordinated motions by a converter formed by DNA-disengaged RuvB subunits stimulates ATP hydrolysis and nucleotide exchange. Immobilization of the converter enables RuvB to convert the ATP-contained energy into a lever motion, pulling 2 nucleotides of DNA out of the RuvA tetramer per ATP hydrolyzed, thus driving DNA branch migration. The RuvB motors rotate together with the DNA substrate, which together with the progressing nucleotide cycle form the mechanistic basis for DNA recombination by continuous HJ branch migration. Branch migration allows RuvC to scan DNA until it finds its consensus sequence, where it cleaves and resolves cruciform DNA. This is Holliday junction branch migration complex subunit RuvB from Streptococcus pneumoniae (strain CGSP14).